An 80-amino-acid chain; its full sequence is Small ribosomal subunit protein bS18 (80 aa).

This sequence belongs to the bacterial ribosomal protein bS18 family. Part of the 30S ribosomal subunit. Forms a tight heterodimer with protein bS6.

Binds as a heterodimer with protein bS6 to the central domain of the 16S rRNA, where it helps stabilize the platform of the 30S subunit. This chain is Small ribosomal subunit protein bS18, found in Staphylococcus haemolyticus (strain JCSC1435).